Consider the following 390-residue polypeptide: Dual-specificity RNA methyltransferase RlmN (390 aa).

The active-site Proton acceptor is the E110. The Radical SAM core domain occupies 116–355 (EADRATLCVS…VIIRKTRGDD (240 aa)). An intrachain disulfide couples C123 to C360. 3 residues coordinate [4Fe-4S] cluster: C130, C134, and C137. S-adenosyl-L-methionine is bound by residues 184-185 (GE), S216, 238-240 (SLH), and N317. The S-methylcysteine intermediate role is filled by C360.

It belongs to the radical SAM superfamily. RlmN family. Requires [4Fe-4S] cluster as cofactor.

The protein localises to the cytoplasm. It catalyses the reaction adenosine(2503) in 23S rRNA + 2 reduced [2Fe-2S]-[ferredoxin] + 2 S-adenosyl-L-methionine = 2-methyladenosine(2503) in 23S rRNA + 5'-deoxyadenosine + L-methionine + 2 oxidized [2Fe-2S]-[ferredoxin] + S-adenosyl-L-homocysteine. The catalysed reaction is adenosine(37) in tRNA + 2 reduced [2Fe-2S]-[ferredoxin] + 2 S-adenosyl-L-methionine = 2-methyladenosine(37) in tRNA + 5'-deoxyadenosine + L-methionine + 2 oxidized [2Fe-2S]-[ferredoxin] + S-adenosyl-L-homocysteine. Specifically methylates position 2 of adenine 2503 in 23S rRNA and position 2 of adenine 37 in tRNAs. m2A2503 modification seems to play a crucial role in the proofreading step occurring at the peptidyl transferase center and thus would serve to optimize ribosomal fidelity. The polypeptide is Dual-specificity RNA methyltransferase RlmN (Haemophilus influenzae (strain ATCC 51907 / DSM 11121 / KW20 / Rd)).